Consider the following 414-residue polypeptide: Glycogen synthase (414 aa).

The protein belongs to the glycosyltransferase group 1 family.

The catalysed reaction is [(1-&gt;4)-alpha-D-glucosyl](n) + UDP-alpha-D-glucose = [(1-&gt;4)-alpha-D-glucosyl](n+1) + UDP + H(+). It functions in the pathway glycan biosynthesis; glycogen biosynthesis. Its function is as follows. Glucosyltransferase that uses UDP-glucose as the sugar donor to elongate alpha-(1-&gt;4)-glucans. Is involved in the biosynthesis of both 6-O-methylglucosyl lipopolysaccharides (MGLP) and glycogen. May also use ADP-glucose as substrate. The protein is Glycogen synthase of Mycobacterium tuberculosis (strain CDC 1551 / Oshkosh).